The primary structure comprises 407 residues: Phosphopentomutase (407 aa).

Mn(2+) contacts are provided by Asp11, Asp305, His310, Asp346, His347, and His358.

It belongs to the phosphopentomutase family. Mn(2+) is required as a cofactor.

The protein resides in the cytoplasm. The enzyme catalyses 2-deoxy-alpha-D-ribose 1-phosphate = 2-deoxy-D-ribose 5-phosphate. It carries out the reaction alpha-D-ribose 1-phosphate = D-ribose 5-phosphate. It participates in carbohydrate degradation; 2-deoxy-D-ribose 1-phosphate degradation; D-glyceraldehyde 3-phosphate and acetaldehyde from 2-deoxy-alpha-D-ribose 1-phosphate: step 1/2. In terms of biological role, isomerase that catalyzes the conversion of deoxy-ribose 1-phosphate (dRib-1-P) and ribose 1-phosphate (Rib-1-P) to deoxy-ribose 5-phosphate (dRib-5-P) and ribose 5-phosphate (Rib-5-P), respectively. The chain is Phosphopentomutase from Legionella pneumophila subsp. pneumophila (strain Philadelphia 1 / ATCC 33152 / DSM 7513).